A 326-amino-acid polypeptide reads, in one-letter code: NADH-quinone oxidoreductase subunit H (326 aa).

Transmembrane regions (helical) follow at residues 11-31 (ILLS…CGAF), 81-101 (VIFT…FAIV), 114-134 (IGIL…LFAG), 154-174 (LSYE…AGSF), 186-206 (LWNV…GVAV), 237-257 (FFVG…TLFF), 265-285 (LPPF…FILI), and 302-322 (WKVC…VILW).

Belongs to the complex I subunit 1 family. NDH-1 is composed of 13 different subunits. Subunits NuoA, H, J, K, L, M, N constitute the membrane sector of the complex.

It is found in the cell inner membrane. It catalyses the reaction a quinone + NADH + 5 H(+)(in) = a quinol + NAD(+) + 4 H(+)(out). Functionally, NDH-1 shuttles electrons from NADH, via FMN and iron-sulfur (Fe-S) centers, to quinones in the respiratory chain. The immediate electron acceptor for the enzyme in this species is believed to be ubiquinone. Couples the redox reaction to proton translocation (for every two electrons transferred, four hydrogen ions are translocated across the cytoplasmic membrane), and thus conserves the redox energy in a proton gradient. This subunit may bind ubiquinone. This is NADH-quinone oxidoreductase subunit H from Cronobacter sakazakii (strain ATCC BAA-894) (Enterobacter sakazakii).